The sequence spans 142 residues: Hemoglobin subunit alpha (142 aa).

The Globin domain occupies 2-142; that stretch reads VLSAADKGNV…VSTVLTSKYR (141 aa). A Phosphoserine modification is found at serine 4. 2 positions are modified to N6-succinyllysine: lysine 8 and lysine 12. Lysine 17 is subject to N6-acetyllysine; alternate. Lysine 17 is subject to N6-succinyllysine; alternate. Tyrosine 25 is subject to Phosphotyrosine. At serine 36 the chain carries Phosphoserine. Lysine 41 carries the N6-succinyllysine modification. A Phosphoserine modification is found at serine 50. Histidine 59 is an O2 binding site. Residue histidine 88 participates in heme b binding. A Phosphoserine modification is found at serine 103. The residue at position 109 (threonine 109) is a Phosphothreonine. Residue serine 125 is modified to Phosphoserine. A phosphothreonine mark is found at threonine 135 and threonine 138. The residue at position 139 (serine 139) is a Phosphoserine.

The protein belongs to the globin family. In terms of assembly, heterotetramer of two alpha chains and two beta chains. Red blood cells.

Its function is as follows. Involved in oxygen transport from the lung to the various peripheral tissues. Functionally, hemopressin acts as an antagonist peptide of the cannabinoid receptor CNR1. Hemopressin-binding efficiently blocks cannabinoid receptor CNR1 and subsequent signaling. This is Hemoglobin subunit alpha (HBA) from Bos taurus (Bovine).